The chain runs to 358 residues: Arogenate dehydrogenase 2, chloroplastic (358 aa).

A chloroplast-targeting transit peptide spans 1–36; it reads MLLHFSPAKPLISPPNLRRNSPTFLISPPRSLRIRA. The Prephenate/arogenate dehydrogenase domain maps to 59–338; that stretch reads LKIAVLGFGN…KKTEQKLLND (280 aa). The segment at 336 to 358 is disordered; it reads LNDGGVVPMNDISSSSSSSSSSS. Residues 348–358 show a composition bias toward low complexity; that stretch reads SSSSSSSSSSS.

This sequence belongs to the prephenate/arogenate dehydrogenase family. In terms of tissue distribution, expressed in roots, stems, leaves, flowers, siliques and seeds. More abundant in seeds.

It is found in the plastid. The protein localises to the chloroplast. The enzyme catalyses L-arogenate + NADP(+) = L-tyrosine + CO2 + NADPH. It functions in the pathway amino-acid biosynthesis; L-tyrosine biosynthesis; L-tyrosine from L-arogenate (NADP(+) route): step 1/1. In terms of biological role, involved in the biosynthesis of tyrosine. Has a weak prephenate dehydrogenase activity. The polypeptide is Arogenate dehydrogenase 2, chloroplastic (TYRAAT2) (Arabidopsis thaliana (Mouse-ear cress)).